Here is a 442-residue protein sequence, read N- to C-terminus: ATP-dependent protease ATPase subunit HslU (442 aa).

Residues Ile18 and 60-65 (GVGKTE) contribute to the ATP site. A disordered region spans residues 133-156 (DALLPKPKNDWDNTDSDTSSNTRQ). ATP-binding residues include Asp255, Glu320, and Arg392.

It belongs to the ClpX chaperone family. HslU subfamily. As to quaternary structure, a double ring-shaped homohexamer of HslV is capped on each side by a ring-shaped HslU homohexamer. The assembly of the HslU/HslV complex is dependent on binding of ATP.

The protein localises to the cytoplasm. In terms of biological role, ATPase subunit of a proteasome-like degradation complex; this subunit has chaperone activity. The binding of ATP and its subsequent hydrolysis by HslU are essential for unfolding of protein substrates subsequently hydrolyzed by HslV. HslU recognizes the N-terminal part of its protein substrates and unfolds these before they are guided to HslV for hydrolysis. In Shewanella sp. (strain ANA-3), this protein is ATP-dependent protease ATPase subunit HslU.